The sequence spans 347 residues: NADH-ubiquinone oxidoreductase chain 2 (347 aa).

Helical transmembrane passes span 3–23 (PPILIIILSTVISGTMIVLTS), 25–45 (HWLLTWIGFEMNMLAIIPILM), 59–79 (YFLTQATASMLLMMGIIINLL), 93–115 (MASTMMTIAMTMKLGLAPFHFWV), 149–169 (INTNLLMTMATMSVLIGGWGG), 178–198 (ILAYSSIAHMGWMVAIMTYNP), 200–220 (VMILNLMMYIMMTLTSFMLFI), 242–262 (SFILVLMLSLGGLPPLSGFIP), 274–294 (EMIILPTLLAITALLNLYFYM), and 323–343 (MALLPPLIIISTMLLPLTPMM).

This sequence belongs to the complex I subunit 2 family. As to quaternary structure, core subunit of respiratory chain NADH dehydrogenase (Complex I) which is composed of 45 different subunits. Interacts with TMEM242.

It localises to the mitochondrion inner membrane. The enzyme catalyses a ubiquinone + NADH + 5 H(+)(in) = a ubiquinol + NAD(+) + 4 H(+)(out). Core subunit of the mitochondrial membrane respiratory chain NADH dehydrogenase (Complex I) which catalyzes electron transfer from NADH through the respiratory chain, using ubiquinone as an electron acceptor. Essential for the catalytic activity and assembly of complex I. This is NADH-ubiquinone oxidoreductase chain 2 from Nandinia binotata (African palm civet).